The sequence spans 125 residues: Snaclec B7 (125 aa).

3 disulfide bridges follow: Cys2/Cys13, Cys30/Cys119, and Cys96/Cys111. One can recognise a C-type lectin domain in the interval 9-120 (HEGHCYKVFK…CNISQYFVCQ (112 aa)). A glycan (N-linked (GlcNAc...) asparagine) is linked at Asn112.

Belongs to the snaclec family. In terms of assembly, heterodimer; disulfide-linked. As to expression, expressed by the venom gland.

Its subcellular location is the secreted. Its function is as follows. Interferes with one step of hemostasis (modulation of platelet aggregation, or coagulation cascade, for example). The protein is Snaclec B7 of Macrovipera lebetinus (Levantine viper).